The sequence spans 310 residues: DNA repair nuclease APEX1 (310 aa).

Residues 1–51 (MPKRAKKNEEGVDGEADNGTAAAKKEKKGKEPEAPILYEDPPEKLTSKDGR) form a disordered region. The segment covering 41 to 51 (PPEKLTSKDGR) has biased composition (basic and acidic residues). Mg(2+)-binding residues include Asp-63 and Glu-89. Tyr-164 is an active-site residue. 3 residues coordinate Mg(2+): Asp-203, Asn-205, and Asp-300. The active-site Proton donor/acceptor is the Asp-203.

The protein belongs to the DNA repair enzymes AP/ExoA family. Mg(2+) serves as cofactor. The cofactor is Mn(2+).

It is found in the nucleus. Its subcellular location is the nucleolus. The protein resides in the nucleus speckle. The protein localises to the endoplasmic reticulum. It localises to the cytoplasm. It is found in the mitochondrion. It carries out the reaction Exonucleolytic cleavage in the 3'- to 5'-direction to yield nucleoside 5'-phosphates.. Its function is as follows. Functions as an apurinic/apyrimidinic (AP) endodeoxyribonuclease in the DNA base excision repair (BER) pathway of DNA lesions induced by oxidative and alkylating agents. Initiates repair of AP sites in DNA by catalyzing hydrolytic incision of the phosphodiester backbone immediately adjacent to the damage, generating a single-strand break with 5'-deoxyribose phosphate and 3'-hydroxyl ends. Has 3'-5' exoribonuclease activity on mismatched deoxyribonucleotides at the 3' termini of nicked or gapped DNA molecules during short-patch BER. May also play a role in the epigenetic regulation of gene expression by participating in DNA demethylation. Required for passage through the mid-blastula transition MBT. May also act as an endoribonuclease involved in the control of single-stranded RNA metabolism. Has no redox activity. Binds DNA and RNA. In Danio rerio (Zebrafish), this protein is DNA repair nuclease APEX1 (apex1).